The following is a 674-amino-acid chain: DNA ligase (674 aa).

Residues aspartate 42–aspartate 46, serine 91–methionine 92, and glutamate 121 contribute to the NAD(+) site. Residue lysine 123 is the N6-AMP-lysine intermediate of the active site. NAD(+) contacts are provided by arginine 144, glutamate 178, lysine 294, and lysine 318. Residues cysteine 412, cysteine 415, cysteine 430, and cysteine 435 each coordinate Zn(2+). A BRCT domain is found at valine 596–aspartate 674.

This sequence belongs to the NAD-dependent DNA ligase family. LigA subfamily. Mg(2+) is required as a cofactor. The cofactor is Mn(2+).

The catalysed reaction is NAD(+) + (deoxyribonucleotide)n-3'-hydroxyl + 5'-phospho-(deoxyribonucleotide)m = (deoxyribonucleotide)n+m + AMP + beta-nicotinamide D-nucleotide.. Its function is as follows. DNA ligase that catalyzes the formation of phosphodiester linkages between 5'-phosphoryl and 3'-hydroxyl groups in double-stranded DNA using NAD as a coenzyme and as the energy source for the reaction. It is essential for DNA replication and repair of damaged DNA. The chain is DNA ligase from Lacticaseibacillus paracasei (strain ATCC 334 / BCRC 17002 / CCUG 31169 / CIP 107868 / KCTC 3260 / NRRL B-441) (Lactobacillus paracasei).